Reading from the N-terminus, the 227-residue chain is Uracil-DNA glycosylase (227 aa).

Asp-64 (proton acceptor) is an active-site residue.

This sequence belongs to the uracil-DNA glycosylase (UDG) superfamily. UNG family.

Its subcellular location is the cytoplasm. It catalyses the reaction Hydrolyzes single-stranded DNA or mismatched double-stranded DNA and polynucleotides, releasing free uracil.. Functionally, excises uracil residues from the DNA which can arise as a result of misincorporation of dUMP residues by DNA polymerase or due to deamination of cytosine. The sequence is that of Uracil-DNA glycosylase from Sodalis glossinidius (strain morsitans).